The sequence spans 424 residues: GTPase Obg (424 aa).

The 158-residue stretch at 1–158 (MFIDTAKIFV…RWIKLELKLL (158 aa)) folds into the Obg domain. Residues 159 to 331 (ADVGLIGFPN…LMKEAARLLS (173 aa)) enclose the OBG-type G domain. GTP contacts are provided by residues 165–172 (GFPNVGKS), 190–194 (FTTLK), 212–215 (DIPG), 282–285 (NKSD), and 312–314 (SAA). The Mg(2+) site is built by Ser172 and Thr192. The 80-residue stretch at 345-424 (RFIEEEKRFT…LNDFEFDFLL (80 aa)) folds into the OCT domain.

The protein belongs to the TRAFAC class OBG-HflX-like GTPase superfamily. OBG GTPase family. Monomer. Mg(2+) is required as a cofactor.

It localises to the cytoplasm. An essential GTPase which binds GTP, GDP and possibly (p)ppGpp with moderate affinity, with high nucleotide exchange rates and a fairly low GTP hydrolysis rate. Plays a role in control of the cell cycle, stress response, ribosome biogenesis and in those bacteria that undergo differentiation, in morphogenesis control. This is GTPase Obg from Clostridium botulinum (strain ATCC 19397 / Type A).